The sequence spans 372 residues: Ligninase A (372 aa).

The N-terminal stretch at 1 to 21 (MAFKQLVAAISLALSLTTANA) is a signal peptide. A propeptide spanning residues 22 to 28 (AVVKEKR) is cleaved from the precursor. Cystine bridges form between Cys31–Cys43, Cys42–Cys313, Cys62–Cys148, and Cys277–Cys345. Catalysis depends on His75, which acts as the Proton acceptor. Asp76, Gly94, Asp96, and Ser98 together coordinate Ca(2+). His204 is a heme b binding site. Residues Ser205, Asp222, Thr224, Ile227, and Asp229 each contribute to the Ca(2+) site. The N-linked (GlcNAc...) asparagine glycan is linked to Asn285.

Belongs to the peroxidase family. Ligninase subfamily. It depends on heme b as a cofactor. Requires Ca(2+) as cofactor.

It carries out the reaction 1-(3,4-dimethoxyphenyl)-2-(2-methoxyphenoxy)propane-1,3-diol + H2O2 = 3,4-dimethoxybenzaldehyde + guaiacol + glycolaldehyde + H2O. The enzyme catalyses 2 (3,4-dimethoxyphenyl)methanol + H2O2 = 2 (3,4-dimethoxyphenyl)methanol radical + 2 H2O. It participates in secondary metabolite metabolism; lignin degradation. In terms of biological role, depolymerization of lignin. Catalyzes the C(alpha)-C(beta) cleavage of the propyl side chains of lignin. The protein is Ligninase A (LIPA) of Phanerodontia chrysosporium (White-rot fungus).